The following is a 375-amino-acid chain: tRNA (guanine(26)-N(2))-dimethyltransferase (375 aa).

A Trm1 methyltransferase domain is found at 2-368 (KYITEGNTKL…AKLIDIVEFI (367 aa)). S-adenosyl-L-methionine is bound by residues arginine 35, arginine 66, aspartate 89, aspartate 116, and alanine 117.

It belongs to the class I-like SAM-binding methyltransferase superfamily. Trm1 family.

The catalysed reaction is guanosine(26) in tRNA + 2 S-adenosyl-L-methionine = N(2)-dimethylguanosine(26) in tRNA + 2 S-adenosyl-L-homocysteine + 2 H(+). Functionally, dimethylates a single guanine residue at position 26 of a number of tRNAs using S-adenosyl-L-methionine as donor of the methyl groups. This chain is tRNA (guanine(26)-N(2))-dimethyltransferase, found in Methanococcus aeolicus (strain ATCC BAA-1280 / DSM 17508 / OCM 812 / Nankai-3).